Here is a 445-residue protein sequence, read N- to C-terminus: Exodeoxyribonuclease 7 large subunit (445 aa).

It belongs to the XseA family. In terms of assembly, heterooligomer composed of large and small subunits.

It localises to the cytoplasm. The enzyme catalyses Exonucleolytic cleavage in either 5'- to 3'- or 3'- to 5'-direction to yield nucleoside 5'-phosphates.. In terms of biological role, bidirectionally degrades single-stranded DNA into large acid-insoluble oligonucleotides, which are then degraded further into small acid-soluble oligonucleotides. This is Exodeoxyribonuclease 7 large subunit from Xanthomonas oryzae pv. oryzae (strain MAFF 311018).